Consider the following 663-residue polypeptide: DNA topoisomerase 4 subunit B (663 aa).

Residues Tyr-7, Asn-47, Asp-74, 114–120 (GLHGVGA), and Lys-341 contribute to the ATP site. Residues 386 to 418 (REAARKAREDARSGKKNKRKDTLLSGKLTPAQS) are disordered. Basic and acidic residues predominate over residues 387–398 (EAARKAREDARS). The 115-residue stretch at 424 to 538 (NELYLVEGDS…AGRVFIALPP (115 aa)) folds into the Toprim domain. Mg(2+) is bound by residues Glu-430, Asp-503, and Asp-505.

The protein belongs to the type II topoisomerase family. ParE type 2 subfamily. In terms of assembly, heterotetramer composed of ParC and ParE. It depends on Mg(2+) as a cofactor. Mn(2+) serves as cofactor. Requires Ca(2+) as cofactor.

The enzyme catalyses ATP-dependent breakage, passage and rejoining of double-stranded DNA.. Its function is as follows. Topoisomerase IV is essential for chromosome segregation. It relaxes supercoiled DNA. Performs the decatenation events required during the replication of a circular DNA molecule. In Staphylococcus aureus (strain MRSA252), this protein is DNA topoisomerase 4 subunit B.